Here is a 132-residue protein sequence, read N- to C-terminus: MGGCVGKGRRHIEEDKLDFKGGNVHVITSKEDWDRKIEEANKDGKIVVANFSASWCGPCRVIAPIYAEMSKTYPQLMFLTIDVDDLMDFSSSWDIRATPTFFFIKNEKQVDKLVGANKPELEKKVQALADGS.

The region spanning 18–130 is the Thioredoxin domain; sequence DFKGGNVHVI…LEKKVQALAD (113 aa). Active-site nucleophile residues include C56 and C59. C56 and C59 are oxidised to a cystine.

Belongs to the thioredoxin family. Plant H-type subfamily.

It localises to the cytoplasm. Its function is as follows. Probable thiol-disulfide oxidoreductase that may be involved in the redox regulation of a number of cytosolic enzymes. The polypeptide is Thioredoxin H4-2 (Oryza sativa subsp. japonica (Rice)).